The following is a 284-amino-acid chain: Four and a half LIM domains protein 5 (284 aa).

Residues 8–32 form a C4-type zinc finger; that stretch reads CQYCTASLLGKKYVLKDDSPYCVTC. LIM zinc-binding domains follow at residues 39–100, 101–160, 161–220, and 223–283; these read NYCE…ECSS, KCFH…KEFA, HYCN…LYAN, and VACS…MDTD.

In terms of assembly, interacts with CREM (via the third LIM domain). Interacts (via second LIM domain) with SPAG8. In terms of tissue distribution, testis-specific (at protein level).

It is found in the nucleus. In terms of biological role, may be involved in the regulation of spermatogenesis. Stimulates CREM transcriptional activity in a phosphorylation-independent manner. The sequence is that of Four and a half LIM domains protein 5 (FHL5) from Homo sapiens (Human).